The primary structure comprises 240 residues: Methylthioribulose-1-phosphate dehydratase (240 aa).

Position 99 (Cys99) interacts with substrate. The Zn(2+) site is built by His116 and His118. The active-site Proton donor/acceptor is the Glu145. A Zn(2+)-binding site is contributed by His201.

It belongs to the aldolase class II family. MtnB subfamily. Zn(2+) is required as a cofactor.

The protein resides in the cytoplasm. The enzyme catalyses 5-(methylsulfanyl)-D-ribulose 1-phosphate = 5-methylsulfanyl-2,3-dioxopentyl phosphate + H2O. It participates in amino-acid biosynthesis; L-methionine biosynthesis via salvage pathway; L-methionine from S-methyl-5-thio-alpha-D-ribose 1-phosphate: step 2/6. Functionally, catalyzes the dehydration of methylthioribulose-1-phosphate (MTRu-1-P) into 2,3-diketo-5-methylthiopentyl-1-phosphate (DK-MTP-1-P). The chain is Methylthioribulose-1-phosphate dehydratase from Ajellomyces capsulatus (strain H143) (Darling's disease fungus).